Here is a 312-residue protein sequence, read N- to C-terminus: Methionyl-tRNA formyltransferase (312 aa).

Ser109 to Pro112 serves as a coordination point for (6S)-5,6,7,8-tetrahydrofolate.

It belongs to the Fmt family.

It carries out the reaction L-methionyl-tRNA(fMet) + (6R)-10-formyltetrahydrofolate = N-formyl-L-methionyl-tRNA(fMet) + (6S)-5,6,7,8-tetrahydrofolate + H(+). Its function is as follows. Attaches a formyl group to the free amino group of methionyl-tRNA(fMet). The formyl group appears to play a dual role in the initiator identity of N-formylmethionyl-tRNA by promoting its recognition by IF2 and preventing the misappropriation of this tRNA by the elongation apparatus. The sequence is that of Methionyl-tRNA formyltransferase from Geotalea daltonii (strain DSM 22248 / JCM 15807 / FRC-32) (Geobacter daltonii).